The sequence spans 437 residues: tRNA-2-methylthio-N(6)-dimethylallyladenosine synthase (437 aa).

The 117-residue stretch at 5–121 (KKLYIKTYGC…LPELTARAAT (117 aa)) folds into the MTTase N-terminal domain. 6 residues coordinate [4Fe-4S] cluster: Cys-14, Cys-50, Cys-84, Cys-159, Cys-163, and Cys-166. In terms of domain architecture, Radical SAM core spans 145 to 371 (AKRGPTAFLT…QALLTRQQRA (227 aa)). Residues 374–436 (DAKVGTTARV…ANSLRGVLIA (63 aa)) enclose the TRAM domain.

Belongs to the methylthiotransferase family. MiaB subfamily. In terms of assembly, monomer. [4Fe-4S] cluster is required as a cofactor.

Its subcellular location is the cytoplasm. The enzyme catalyses N(6)-dimethylallyladenosine(37) in tRNA + (sulfur carrier)-SH + AH2 + 2 S-adenosyl-L-methionine = 2-methylsulfanyl-N(6)-dimethylallyladenosine(37) in tRNA + (sulfur carrier)-H + 5'-deoxyadenosine + L-methionine + A + S-adenosyl-L-homocysteine + 2 H(+). Functionally, catalyzes the methylthiolation of N6-(dimethylallyl)adenosine (i(6)A), leading to the formation of 2-methylthio-N6-(dimethylallyl)adenosine (ms(2)i(6)A) at position 37 in tRNAs that read codons beginning with uridine. The protein is tRNA-2-methylthio-N(6)-dimethylallyladenosine synthase of Dinoroseobacter shibae (strain DSM 16493 / NCIMB 14021 / DFL 12).